The sequence spans 357 residues: UDP-N-acetylglucosamine--N-acetylmuramyl-(pentapeptide) pyrophosphoryl-undecaprenol N-acetylglucosamine transferase (357 aa).

UDP-N-acetyl-alpha-D-glucosamine contacts are provided by residues 15 to 17 (TGG), Asn-124, Arg-165, Ser-194, and Gln-288.

It belongs to the glycosyltransferase 28 family. MurG subfamily.

It is found in the cell inner membrane. It catalyses the reaction di-trans,octa-cis-undecaprenyl diphospho-N-acetyl-alpha-D-muramoyl-L-alanyl-D-glutamyl-meso-2,6-diaminopimeloyl-D-alanyl-D-alanine + UDP-N-acetyl-alpha-D-glucosamine = di-trans,octa-cis-undecaprenyl diphospho-[N-acetyl-alpha-D-glucosaminyl-(1-&gt;4)]-N-acetyl-alpha-D-muramoyl-L-alanyl-D-glutamyl-meso-2,6-diaminopimeloyl-D-alanyl-D-alanine + UDP + H(+). It participates in cell wall biogenesis; peptidoglycan biosynthesis. Its function is as follows. Cell wall formation. Catalyzes the transfer of a GlcNAc subunit on undecaprenyl-pyrophosphoryl-MurNAc-pentapeptide (lipid intermediate I) to form undecaprenyl-pyrophosphoryl-MurNAc-(pentapeptide)GlcNAc (lipid intermediate II). The chain is UDP-N-acetylglucosamine--N-acetylmuramyl-(pentapeptide) pyrophosphoryl-undecaprenol N-acetylglucosamine transferase from Nostoc sp. (strain PCC 7120 / SAG 25.82 / UTEX 2576).